The chain runs to 93 residues: Small ribosomal subunit protein uS19 (93 aa).

Positions 73 to 93 (EFSPTRTFRGHVKDDRKSKRR) are disordered. Residues 83–93 (HVKDDRKSKRR) show a composition bias toward basic and acidic residues.

The protein belongs to the universal ribosomal protein uS19 family.

In terms of biological role, protein S19 forms a complex with S13 that binds strongly to the 16S ribosomal RNA. In Streptomyces coelicolor (strain ATCC BAA-471 / A3(2) / M145), this protein is Small ribosomal subunit protein uS19.